The primary structure comprises 313 residues: MVDCTKPIAESNNFIILDKYNPDWKITESYQSEGDLERELIQDLVNQGYEYLPTLNNTKAMLANVREQLQNLNNVEFLEAEWRRFVETWMDKPSDGVVEKARKIHDDYVHDFVFDDGRIQNIYLLDRKNILRNKVQVIKQFEQAGTHANRYDVTILVNGLPLVQIELKKRGVAIREAFNQIHRYSKESFNSENSLFKYLQLFVISNGTDTRYFANTTKRDKNSFDFTMNWAKSDNTLIKDLKDFTATFFQKHTLLNVLVNYSVFDSSQTLLVMRPYQIAATERILWKIKSSFTSEELVKTGKRWVYLAHYRFW.

Belongs to the HsdR family. As to quaternary structure, the type I restriction/modification system is composed of three polypeptides R, M and S; the restriction enzyme has stoichiometry R(2)M(2)S(1) while the methyltransferase is M(2)S(1).

The enzyme catalyses Endonucleolytic cleavage of DNA to give random double-stranded fragments with terminal 5'-phosphates, ATP is simultaneously hydrolyzed.. Its function is as follows. The subtype C restriction (R) subunit of a type I restriction enzyme that recognizes 5'-CCAN(7)RTGC-3' and cleaves a random distance away. The R subunit is required for both endonuclease and ATPase activities but not for modification. Cleaves only non-methylated DNA, hemi-methylated and fully methylated DNA are not substrates. After locating a non-methylated recognition site, the enzyme complex serves as a molecular motor that translocates DNA in an ATP-dependent manner until a collision occurs that triggers cleavage. The prr locus restricts phage T4 mutants lacking polynucleotide kinase or RNA ligase; T4 mutants lacking these genes manifest a T4-induced anticodon nuclease (ACNase). This is a putative 'masking-agent' for the ACNase encoded by prrC. It is thought that Stp and other T4-encoded ACNase factors counteract the masking agents, thus activating the latent ACNase. The chain is Type I restriction enzyme EcoprrI endonuclease subunit from Escherichia coli.